Consider the following 332-residue polypeptide: Fructose-bisphosphate aldolase (332 aa).

Serine 56 contributes to the D-glyceraldehyde 3-phosphate binding site. Aspartate 93 (proton donor) is an active-site residue. Residues histidine 94, aspartate 115, glutamate 147, and histidine 191 each contribute to the Zn(2+) site. Dihydroxyacetone phosphate is bound at residue glycine 192. Zn(2+) is bound at residue histidine 234. Residues 235–237 (GAS) and 277–280 (NIDS) contribute to the dihydroxyacetone phosphate site.

This sequence belongs to the class II fructose-bisphosphate aldolase family. As to quaternary structure, homodimer. It depends on Zn(2+) as a cofactor.

The catalysed reaction is beta-D-fructose 1,6-bisphosphate = D-glyceraldehyde 3-phosphate + dihydroxyacetone phosphate. Its pathway is carbohydrate degradation; glycolysis; D-glyceraldehyde 3-phosphate and glycerone phosphate from D-glucose: step 4/4. Functionally, catalyzes the aldol condensation of dihydroxyacetone phosphate (DHAP or glycerone-phosphate) with glyceraldehyde 3-phosphate (G3P) to form fructose 1,6-bisphosphate (FBP) in gluconeogenesis and the reverse reaction in glycolysis. The chain is Fructose-bisphosphate aldolase (fba) from Treponema pallidum (strain Nichols).